The chain runs to 153 residues: Peptidoglycan-associated lipoprotein (153 aa).

Residues 1-19 (MNKFVKSLLVAGSVAALAA) form the signal peptide. The N-palmitoyl cysteine moiety is linked to residue C20. C20 carries S-diacylglycerol cysteine lipidation. The OmpA-like domain maps to 40-153 (SVADLQQRYN…SKNRRAVLAY (114 aa)). 2 peptidoglycan binding regions span residues 55–56 (FD) and 97–101 (YNIAL).

The protein belongs to the Pal lipoprotein family. In terms of assembly, the Tol-Pal system is composed of five core proteins: the inner membrane proteins TolA, TolQ and TolR, the periplasmic protein TolB and the outer membrane protein Pal. They form a network linking the inner and outer membranes and the peptidoglycan layer.

The protein localises to the cell outer membrane. In terms of biological role, part of the Tol-Pal system, which plays a role in outer membrane invagination during cell division and is important for maintaining outer membrane integrity. The chain is Peptidoglycan-associated lipoprotein from Haemophilus influenzae (strain ATCC 51907 / DSM 11121 / KW20 / Rd).